A 391-amino-acid chain; its full sequence is MSIVRMTDLDLSGKRVLIRQDLNVPIENGRITSEQRITASLPTLKRALEQGAAVMVTSHLGRPKEGVWSEADSLAPVAQRLSELLGREVPLVRDWVDGVDVQPGQLVLLENCRMNVGEGKDDEALSKKYAALCDVFVMDAFGTAHRAQASTHGVIRFAPVAAGGPLLMAELDALAQALDAPAKPLLAIVAGSKVSTKLELLASLVGKVDQLIVGGGIANTFIAAAGYNVGKSLYEPDLLDTAKKIVADAKARGADIPLPVDVVTAKQFLPDAVAEVKAVDAVAEDDLILDIGPQTAAQYAQLIENAGTVVWNGPVGVFEFEAFSKGTEALARAIASSNAFSIAGGGDTLAAVDKFDIAAQVSYISTGGGAFLEFLEGKTLPAVAALDARGA.

Substrate contacts are provided by residues 21 to 23 (DLN), Arg-36, 59 to 62 (HLGR), Arg-113, and Arg-146. Residues Lys-197, Glu-319, and 345–348 (GGDT) contribute to the ATP site.

This sequence belongs to the phosphoglycerate kinase family. In terms of assembly, monomer.

The protein resides in the cytoplasm. It carries out the reaction (2R)-3-phosphoglycerate + ATP = (2R)-3-phospho-glyceroyl phosphate + ADP. The protein operates within carbohydrate degradation; glycolysis; pyruvate from D-glyceraldehyde 3-phosphate: step 2/5. This chain is Phosphoglycerate kinase, found in Stenotrophomonas maltophilia (strain R551-3).